Reading from the N-terminus, the 126-residue chain is Ejaculatory bulb-specific protein 3 (126 aa).

Residues 1-17 (MKMILALVVLGLVLVAA) form the signal peptide.

The protein belongs to the insect A10/OS-D protein family. Specifically expressed in the ejaculatory bulb and seminal fluid.

It localises to the secreted. Functionally, protein component of the posterior mating plug. This is Ejaculatory bulb-specific protein 3 from Drosophila melanogaster (Fruit fly).